The sequence spans 155 residues: Peptide deformylase 2 (155 aa).

Positions 90 and 132 each coordinate Fe cation. Glu-133 is a catalytic residue. His-136 contributes to the Fe cation binding site.

It belongs to the polypeptide deformylase family. It depends on Fe(2+) as a cofactor.

It carries out the reaction N-terminal N-formyl-L-methionyl-[peptide] + H2O = N-terminal L-methionyl-[peptide] + formate. Removes the formyl group from the N-terminal Met of newly synthesized proteins. Requires at least a dipeptide for an efficient rate of reaction. N-terminal L-methionine is a prerequisite for activity but the enzyme has broad specificity at other positions. The sequence is that of Peptide deformylase 2 from Clostridium perfringens (strain 13 / Type A).